Reading from the N-terminus, the 201-residue chain is 3-isopropylmalate dehydratase small subunit (201 aa).

The protein belongs to the LeuD family. LeuD type 1 subfamily. Heterodimer of LeuC and LeuD.

The enzyme catalyses (2R,3S)-3-isopropylmalate = (2S)-2-isopropylmalate. Its pathway is amino-acid biosynthesis; L-leucine biosynthesis; L-leucine from 3-methyl-2-oxobutanoate: step 2/4. Catalyzes the isomerization between 2-isopropylmalate and 3-isopropylmalate, via the formation of 2-isopropylmaleate. In Shewanella amazonensis (strain ATCC BAA-1098 / SB2B), this protein is 3-isopropylmalate dehydratase small subunit.